The following is a 118-amino-acid chain: Protein TusC (118 aa).

This sequence belongs to the DsrF/TusC family. In terms of assembly, heterohexamer, formed by a dimer of trimers. The hexameric TusBCD complex contains 2 copies each of TusB, TusC and TusD. The TusBCD complex interacts with TusE.

The protein resides in the cytoplasm. In terms of biological role, part of a sulfur-relay system required for 2-thiolation of 5-methylaminomethyl-2-thiouridine (mnm(5)s(2)U) at tRNA wobble positions. This Salmonella gallinarum (strain 287/91 / NCTC 13346) protein is Protein TusC.